Consider the following 236-residue polypeptide: 2-C-methyl-D-erythritol 4-phosphate cytidylyltransferase (236 aa).

The protein belongs to the IspD/TarI cytidylyltransferase family. IspD subfamily. In terms of assembly, homodimer.

The enzyme catalyses 2-C-methyl-D-erythritol 4-phosphate + CTP + H(+) = 4-CDP-2-C-methyl-D-erythritol + diphosphate. Its pathway is isoprenoid biosynthesis; isopentenyl diphosphate biosynthesis via DXP pathway; isopentenyl diphosphate from 1-deoxy-D-xylulose 5-phosphate: step 2/6. Catalyzes the formation of 4-diphosphocytidyl-2-C-methyl-D-erythritol from CTP and 2-C-methyl-D-erythritol 4-phosphate (MEP). This Escherichia coli O7:K1 (strain IAI39 / ExPEC) protein is 2-C-methyl-D-erythritol 4-phosphate cytidylyltransferase.